We begin with the raw amino-acid sequence, 626 residues long: Elongation factor 4 (626 aa).

In terms of domain architecture, tr-type G spans 14–195 (SVIRNFCIIA…QIVMDVPAPH (182 aa)). GTP is bound by residues 26–31 (DHGKST) and 142–145 (NKID). The segment at 603–626 (LSTGEDSNDRDTKDKIRAAQKTEG) is disordered. The span at 609-626 (SNDRDTKDKIRAAQKTEG) shows a compositional bias: basic and acidic residues.

Belongs to the TRAFAC class translation factor GTPase superfamily. Classic translation factor GTPase family. LepA subfamily.

Its subcellular location is the cell membrane. It catalyses the reaction GTP + H2O = GDP + phosphate + H(+). In terms of biological role, required for accurate and efficient protein synthesis under certain stress conditions. May act as a fidelity factor of the translation reaction, by catalyzing a one-codon backward translocation of tRNAs on improperly translocated ribosomes. Back-translocation proceeds from a post-translocation (POST) complex to a pre-translocation (PRE) complex, thus giving elongation factor G a second chance to translocate the tRNAs correctly. Binds to ribosomes in a GTP-dependent manner. The polypeptide is Elongation factor 4 (Bifidobacterium longum (strain DJO10A)).